The following is a 433-amino-acid chain: UPF0597 protein DNO_0106 (433 aa).

Belongs to the UPF0597 family.

The polypeptide is UPF0597 protein DNO_0106 (Dichelobacter nodosus (strain VCS1703A)).